A 224-amino-acid polypeptide reads, in one-letter code: UPF0758 protein VF_0126 (224 aa).

Positions 102 to 224 (ALTSPEHTKR…IVSFAERGWI (123 aa)) constitute an MPN domain. Positions 173, 175, and 186 each coordinate Zn(2+). Residues 173–186 (HNHPSGVAEPSQAD) carry the JAMM motif motif.

The protein belongs to the UPF0758 family.

The polypeptide is UPF0758 protein VF_0126 (Aliivibrio fischeri (strain ATCC 700601 / ES114) (Vibrio fischeri)).